The following is a 253-amino-acid chain: Phosphate import ATP-binding protein PstB (253 aa).

Positions 7–248 constitute an ABC transporter domain; sequence IEVEDLNVYF…PRDKRTEDYI (242 aa). Residue 39–46 participates in ATP binding; the sequence is GPSGCGKS.

It belongs to the ABC transporter superfamily. Phosphate importer (TC 3.A.1.7) family. The complex is composed of two ATP-binding proteins (PstB), two transmembrane proteins (PstC and PstA) and a solute-binding protein (PstS).

The protein localises to the cell membrane. The enzyme catalyses phosphate(out) + ATP + H2O = ADP + 2 phosphate(in) + H(+). Part of the ABC transporter complex PstSACB involved in phosphate import. Responsible for energy coupling to the transport system. This chain is Phosphate import ATP-binding protein PstB, found in Methanothermobacter thermautotrophicus (strain ATCC 29096 / DSM 1053 / JCM 10044 / NBRC 100330 / Delta H) (Methanobacterium thermoautotrophicum).